The chain runs to 371 residues: Cyclic AMP-responsive element-binding protein 3 (371 aa).

The interval 1 to 92 is transcription activation (acidic); sequence MELELDAGDQ…LPRETVSMDL (92 aa). Topologically, residues 1 to 230 are cytoplasmic; the sequence is MELELDAGDQ…SNKTSSSSTC (230 aa). 2 short sequence motifs (LXXLL motif) span residues 13-17 and 54-58; these read LAFLL and LCSLL. The HCFC1-binding-motif (HBM) signature appears at 78–81; it reads DHTY. Residues 150–213 form the bZIP domain; it reads ILKRVRRKIR…LSLLDQLRKL (64 aa). The interval 152 to 184 is basic motif; it reads KRVRRKIRNKRSAQESRRKKKVYVGGLESRVLK. Positions 192–213 are leucine-zipper; sequence LQNKVQLLEEQNLSLLDQLRKL. The helical; Signal-anchor for type II membrane protein transmembrane segment at 231–247 threads the bilayer; the sequence is ILVLLVSFCLLLVPAMY. Topologically, residues 248–371 are lumenal; that stretch reads SSDTRGSLPA…SVILQDRYSG (124 aa). 2 N-linked (GlcNAc...) asparagine glycosylation sites follow: asparagine 307 and asparagine 348.

This sequence belongs to the bZIP family. ATF subfamily. In terms of assembly, homodimer. Isoform 1 interacts with HCFC1; the interaction is required to stimulate CREB3 transcriptional activity. Isoform 1 interacts with CREBZF; the interaction occurs only in combination with HCFC1. Isoform 1 interacts (via central part and transmembrane region) with DCSTAMP (via C-terminus cytoplasmic domain). Isoform 1 interacts with OS9. Isoform 1 interacts (via leucine-zipper domain) with CREBRF (via leucine-zipper domain); the interaction occurs only after CREB3 activation and promotes CREB3 degradation. Isoform 1 interacts (via C-terminal domain) with CCR1. As to quaternary structure, (Microbial infection) Interacts with the HCV core protein; homodimerization is prevented by the HCV core protein. Isoform 1 interacts (via leucine-zipper and transmembrane domains) with HIV-1 TMgp41 (via cytoplasmic domain); the interaction reduces CREB3 stability. Processed cyclic AMP-responsive element-binding protein 3 interacts with HIV-1 Tat. Post-translationally, first proteolytically cleaved by site-1 protease (S1P) that generates membrane-associated N-terminus and a luminal C-terminus forms. The membrane-associated N-terminus form is further proteolytically processed probably by the site-2 protease (S2P) through a regulated intramembrane proteolysis (RIP), releasing the transcriptional active processed cyclic AMP-responsive element-binding protein 3 form, which is transported to the nucleus. The proteolytic cleavage is strongly induced during dendritic cell (DC) maturation and inhibited by DCSTAMP. That form is rapidly degraded. N-glycosylated. In terms of tissue distribution, ubiquitously expressed. Expressed in dendritic cells (DC). Weakly expressed in monocytes (at protein level).

It localises to the endoplasmic reticulum membrane. The protein resides in the golgi apparatus. It is found in the cytoplasm. Its subcellular location is the nucleus. Functionally, endoplasmic reticulum (ER)-bound sequence-specific transcription factor that directly binds DNA and activates transcription. Plays a role in the unfolded protein response (UPR), promoting cell survival versus ER stress-induced apoptotic cell death. Also involved in cell proliferation, migration and differentiation, tumor suppression and inflammatory gene expression. Acts as a positive regulator of LKN-1/CCL15-induced chemotaxis signaling of leukocyte cell migration. Associates with chromatin to the HERPUD1 promoter. Also induces transcriptional activation of chemokine receptors. Its function is as follows. (Microbial infection) Plays a role in human immunodeficiency virus type 1 (HIV-1) virus protein expression. (Microbial infection) May play a role as a cellular tumor suppressor that is targeted by the hepatitis C virus (HCV) core protein. In terms of biological role, (Microbial infection) Plays a role in herpes simplex virus-1 (HSV-1) latent infection and reactivation from latency. Represses the VP16-mediated transactivation of immediate early genes of the HSV-1 virus by sequestering host cell factor-1 HCFC1 in the ER membrane of sensory neurons, thereby preventing the initiation of the replicative cascade leading to latent infection. Functionally, functions as a negative transcriptional regulator in ligand-induced transcriptional activation of the glucocorticoid receptor NR3C1 by recruiting and activating histone deacetylases (HDAC1, HDAC2 and HDAC6). Also decreases the acetylation level of histone H4. Does not promote the chemotactic activity of leukocyte cells. Its function is as follows. This is the transcriptionally active form that translocates to the nucleus and activates unfolded protein response (UPR) target genes during endoplasmic reticulum (ER) stress response. Binds the cAMP response element (CRE) (consensus: 5'-GTGACGT[AG][AG]-3') and C/EBP sequences present in many promoters to activate transcription of the genes. Binds to the unfolded protein response element (UPRE) consensus sequences sites. Binds DNA to the 5'-CCAC[GA]-3'half of ERSE II (5'-ATTGG-N-CCACG-3'). (Microbial infection) Activates transcription of genes required for reactivation of the latent HSV-1 virus. It's transcriptional activity is inhibited by CREBZF in a HCFC1-dependent manner, by the viral transactivator protein VP16. Binds DNA to the cAMP response element (CRE) (consensus: 5'-GTGACGT[AG][AG]-3') and C/EBP sequences present in many viral promoters. In terms of biological role, (Microbial infection) It's transcriptional activity is inhibited by CREBZF in a HCFC1-dependent manner, by the viral transactivator HCV core protein. In Homo sapiens (Human), this protein is Cyclic AMP-responsive element-binding protein 3 (CREB3).